The following is a 310-amino-acid chain: Inorganic pyrophosphatase, mitochondrial (310 aa).

The transit peptide at 1–30 (MNLLRMNALTSKARSIERLKQTLNILSIRN) directs the protein to the mitochondrion. Residues Asp152, Asp157, and Asp189 each coordinate Mg(2+).

The protein belongs to the PPase family. Homodimer that binds non-covalently to a protein complex in the inner mitochondrial membrane. The cofactor is Mg(2+).

The protein localises to the mitochondrion. The catalysed reaction is diphosphate + H2O = 2 phosphate + H(+). In terms of biological role, involved in energy production. Its activity is stimulated by uncouplers of ATP synthesis. This Saccharomyces cerevisiae (strain ATCC 204508 / S288c) (Baker's yeast) protein is Inorganic pyrophosphatase, mitochondrial (PPA2).